Here is a 319-residue protein sequence, read N- to C-terminus: Tetrahydromethanopterin S-methyltransferase subunit H (319 aa).

Belongs to the MtrH family. In terms of assembly, the complex is composed of 8 subunits; MtrA, MtrB, MtrC, MtrD, MtrE, MtrF, MtrG and MtrH.

It carries out the reaction 5-methyl-5,6,7,8-tetrahydromethanopterin + coenzyme M + 2 Na(+)(in) = 5,6,7,8-tetrahydromethanopterin + methyl-coenzyme M + 2 Na(+)(out). It functions in the pathway one-carbon metabolism; methanogenesis from CO(2); methyl-coenzyme M from 5,10-methylene-5,6,7,8-tetrahydromethanopterin: step 2/2. Part of a complex that catalyzes the formation of methyl-coenzyme M and tetrahydromethanopterin from coenzyme M and methyl-tetrahydromethanopterin. This is an energy-conserving, sodium-ion translocating step. MtrH catalyzes the transfer of the methyl group from methyl-tetrahydromethanopterin to the corrinoid prosthetic group of MtrA. The protein is Tetrahydromethanopterin S-methyltransferase subunit H of Methanococcus maripaludis (strain C5 / ATCC BAA-1333).